The primary structure comprises 379 residues: uncharacterized protein (379 aa).

3 disordered regions span residues 1–25 (MASD…EKGK), 128–158 (QGKT…IERT), and 355–379 (TEKT…QGDI). Polar residues predominate over residues 128-141 (QGKTTSATTSNSTI).

This is an uncharacterized protein from Caenorhabditis elegans.